The following is a 271-amino-acid chain: Glutamate racemase (271 aa).

Residues 10–11 (DS) and 42–43 (YG) each bind substrate. Residue Cys73 is the Proton donor/acceptor of the active site. 74-75 (NT) serves as a coordination point for substrate. Cys183 functions as the Proton donor/acceptor in the catalytic mechanism. Residue 184–185 (TH) coordinates substrate.

It belongs to the aspartate/glutamate racemases family.

It catalyses the reaction L-glutamate = D-glutamate. It participates in cell wall biogenesis; peptidoglycan biosynthesis. In terms of biological role, provides the (R)-glutamate required for cell wall biosynthesis. The chain is Glutamate racemase from Lactococcus lactis subsp. cremoris (strain MG1363).